Reading from the N-terminus, the 1264-residue chain is P-type sodium-transporting ATPase4 (1264 aa).

Over residues 1 to 12 (MSSQNNNKQGGQ) the composition is skewed to polar residues. Residues 1–102 (MSSQNNNKQG…INGEKNDDNN (102 aa)) are disordered. Basic and acidic residues-rich tracts occupy residues 15–42 (NNKK…DELN) and 50–64 (NDMK…KKNE). 8 helical membrane-spanning segments follow: residues 165–185 (VWLI…LVAA), 186–206 (VASL…IVTL), 359–379 (GLIG…AVII), 393–413 (FVII…GLPM), 923–943 (FVCF…VAIV), 1006–1026 (IFEA…CTGF), 1203–1223 (CSIS…TSIL), and 1226–1246 (TCLL…NLFL).

Belongs to the cation transport ATPase (P-type) (TC 3.A.3) family.

The protein localises to the cell membrane. It catalyses the reaction Na(+)(in) + ATP + H2O = Na(+)(out) + ADP + phosphate + H(+). Inhibited by cipargamin and other spiroindolone compounds. Inhibited by 4-cyano-3-methylisoquinoline derivatives MB14 and MB10 but not RK18. Inhibited by (+)-SJ733, a dihydroisoquinolone compound. Functionally, sodium-exporting ATPase. Required for the extrusion of Na(+) from the intraerythrocytic parasites to maintain a low cytosolic concentration of Na(+). The sequence is that of P-type sodium-transporting ATPase4 from Plasmodium falciparum (isolate 3D7).